The chain runs to 199 residues: Small ribosomal subunit protein eS1 (199 aa).

This sequence belongs to the eukaryotic ribosomal protein eS1 family.

The polypeptide is Small ribosomal subunit protein eS1 (Pyrococcus horikoshii (strain ATCC 700860 / DSM 12428 / JCM 9974 / NBRC 100139 / OT-3)).